The sequence spans 339 residues: Serine racemase (339 aa).

Mg(2+) is bound at residue Glu13. Residues Ser31, Ser32, Ile33, Lys51, and Thr52 each coordinate ATP. The active-site Proton acceptor is the Lys56. Lys56 carries the post-translational modification N6-(pyridoxal phosphate)lysine. Residue Pro69 participates in Ca(2+) binding. Thr71 bears the Phosphothreonine mark. Thr81 is a binding site for Ca(2+). The Proton acceptor role is filled by Ser84. Asn86 is a pyridoxal 5'-phosphate binding site. Residue Gln89 coordinates ATP. S-nitrosocysteine is present on Cys113. ATP is bound at residue Tyr121. Pyridoxal 5'-phosphate is bound at residue Asn154. Asp178 serves as a coordination point for Mg(2+). 5 residues coordinate pyridoxal 5'-phosphate: Gly185, Gly186, Gly187, Gly188, and Met189. The Mg(2+) site is built by Glu210, Ala214, Asp216, and Asn247. Residues Glu210, Ala214, Asp216, and Asn247 each coordinate Ca(2+). 3 residues coordinate Mn(2+): Glu210, Ala214, and Asp216. Residue Lys279 participates in ATP binding. Ser313 lines the pyridoxal 5'-phosphate pocket. Residue Asn316 coordinates ATP.

This sequence belongs to the serine/threonine dehydratase family. Homodimer. It depends on Mg(2+) as a cofactor. Mn(2+) serves as cofactor. The cofactor is Ca(2+). Requires pyridoxal 5'-phosphate as cofactor. In terms of processing, S-nitrosylated, leading to decrease the enzyme activity. As to expression, expressed in the hippocampus (at protein level). Expressed in the small intestine.

It catalyses the reaction L-serine = D-serine. The enzyme catalyses D-serine = pyruvate + NH4(+). The catalysed reaction is L-serine = pyruvate + NH4(+). With respect to regulation, allosterically activated by magnesium, and possibly also other divalent metal cations. Allosterically activated by ATP, ADP or GTP. Its function is as follows. Catalyzes the synthesis of D-serine from L-serine. D-serine is a key coagonist with glutamate at NMDA receptors. Has dehydratase activity towards both L-serine and D-serine. This chain is Serine racemase (Srr), found in Mus musculus (Mouse).